The primary structure comprises 73 residues: Large ribosomal subunit protein bL31 (73 aa).

The protein belongs to the bacterial ribosomal protein bL31 family. Type A subfamily. As to quaternary structure, part of the 50S ribosomal subunit.

Its function is as follows. Binds the 23S rRNA. The protein is Large ribosomal subunit protein bL31 of Rhodospirillum centenum (strain ATCC 51521 / SW).